Here is a 346-residue protein sequence, read N- to C-terminus: Uroporphyrinogen decarboxylase (346 aa).

Substrate is bound by residues 21–25 (RQAGR), F40, D71, Y146, S201, and H316.

The protein belongs to the uroporphyrinogen decarboxylase family. As to quaternary structure, homodimer.

The protein localises to the cytoplasm. The catalysed reaction is uroporphyrinogen III + 4 H(+) = coproporphyrinogen III + 4 CO2. It functions in the pathway porphyrin-containing compound metabolism; protoporphyrin-IX biosynthesis; coproporphyrinogen-III from 5-aminolevulinate: step 4/4. In terms of biological role, catalyzes the decarboxylation of four acetate groups of uroporphyrinogen-III to yield coproporphyrinogen-III. The protein is Uroporphyrinogen decarboxylase of Rickettsia felis (strain ATCC VR-1525 / URRWXCal2) (Rickettsia azadi).